A 720-amino-acid polypeptide reads, in one-letter code: Chloroplastic group IIA intron splicing facilitator CRS1, chloroplastic (720 aa).

The N-terminal 77 residues, 1–77, are a transit peptide targeting the chloroplast; that stretch reads MRNGINILSY…DQFRENRGVS (77 aa). A coiled-coil region spans residues 131–159; it reads KAMKKIVRNVEKLDEDSDSEETQMDDLSE. 2 CRM domains span residues 205 to 301 and 359 to 456; these read LILD…EGQD and AKLT…EVAD. 2 coiled-coil regions span residues 447–477 and 517–553; these read KDFL…TKRE and RNLE…NMEL. Residues 570 to 670 form the CRM 3 domain; it reads EILTNEEREC…KNYKRPSSKL (101 aa).

As to quaternary structure, homodimer. Interacts with RNA. Part of large ribonucleo-protein complexes that include group IIA introns and CRS1.

It is found in the plastid. The protein localises to the chloroplast stroma. In terms of biological role, required for the splicing of group IIA introns in chloroplasts, by regulating the intron folding. Forms splicing particles with RNA. May also be involved in chloroplast protein translation. The sequence is that of Chloroplastic group IIA intron splicing facilitator CRS1, chloroplastic from Arabidopsis thaliana (Mouse-ear cress).